A 445-amino-acid chain; its full sequence is Putative ubiquitin carboxyl-terminal hydrolase L293 (445 aa).

One can recognise a USP domain in the interval 133–441 (KALANFGNSC…SAYIILYGDI (309 aa)). C142 (nucleophile) is an active-site residue. Catalysis depends on H384, which acts as the Proton acceptor.

This sequence belongs to the peptidase C19 family.

It localises to the virion. The catalysed reaction is Thiol-dependent hydrolysis of ester, thioester, amide, peptide and isopeptide bonds formed by the C-terminal Gly of ubiquitin (a 76-residue protein attached to proteins as an intracellular targeting signal).. The protein is Putative ubiquitin carboxyl-terminal hydrolase L293 of Acanthamoeba polyphaga mimivirus (APMV).